A 472-amino-acid polypeptide reads, in one-letter code: Ribulose bisphosphate carboxylase/oxygenase activase, chloroplastic (472 aa).

A chloroplast-targeting transit peptide spans 1–58 (MATAVSTVGAATRAPLNLNGSSAGASVPTSGFLGSSLKKHTNVRFPSSSRTTSMTVKA). 163–170 (GGKGQGKS) contacts ATP. The interval 448–472 (GCTDPEAKNYDPTARSDDGSCTYNL) is disordered. Basic and acidic residues predominate over residues 452–465 (PEAKNYDPTARSDD).

It belongs to the RuBisCO activase family.

The protein resides in the plastid. The protein localises to the chloroplast stroma. Activation of RuBisCO (ribulose-1,5-bisphosphate carboxylase/oxygenase; EC 4.1.1.39) involves the ATP-dependent carboxylation of the epsilon-amino group of lysine leading to a carbamate structure. In Spinacia oleracea (Spinach), this protein is Ribulose bisphosphate carboxylase/oxygenase activase, chloroplastic.